A 365-amino-acid chain; its full sequence is MFEVNPVKFKIKELAERTQLLRGIFDYDAKNERLEEVTRELESSEVWNDPERAQALGKERASLEAVVKTIDDMDSGLEDVEGLLELAIEEEDEDTFNETSKELDYLESRLADLEFRRMFSGPQDASNCYLDIQSGSGGTEAQDWANMVLRMYLRWGEAHGFSPELMEVTDGDVAGIKGATIKFTGEYAFGWLRTETGVHRLVRKSPFDSSGRRHTSFCSVFVYPEIDDDITIDINPSDLRIDTYRASGAGGQHVNKTESAIRITHLPTNTVVQCQNDRSQHKNKDAAMKQLKAKLFELEMLKQNADKQAAEDAKSDIGWGSQIRSYVLDDARIKDLRTGVETRNTQAVLDGDLDKFIEASLKSGL.

Residue Q252 is modified to N5-methylglutamine.

It belongs to the prokaryotic/mitochondrial release factor family. Methylated by PrmC. Methylation increases the termination efficiency of RF2.

It localises to the cytoplasm. Functionally, peptide chain release factor 2 directs the termination of translation in response to the peptide chain termination codons UGA and UAA. The chain is Peptide chain release factor 2 from Shewanella baltica (strain OS223).